A 103-amino-acid polypeptide reads, in one-letter code: Large ribosomal subunit protein bL21 (103 aa).

Belongs to the bacterial ribosomal protein bL21 family. Part of the 50S ribosomal subunit. Contacts protein L20.

This protein binds to 23S rRNA in the presence of protein L20. The sequence is that of Large ribosomal subunit protein bL21 from Polynucleobacter necessarius subsp. necessarius (strain STIR1).